The sequence spans 420 residues: Phosphoribosylamine--glycine ligase (420 aa).

The region spanning 108-314 is the ATP-grasp domain; the sequence is KEIMVKYGVS…FAQNITDILD (207 aa). Residue 134–195 participates in ATP binding; that stretch reads IEKHGAPIVV…EEFLEGEEFS (62 aa). The Mg(2+) site is built by Glu-284 and Asn-286.

The protein belongs to the GARS family. Mg(2+) is required as a cofactor. Requires Mn(2+) as cofactor.

The catalysed reaction is 5-phospho-beta-D-ribosylamine + glycine + ATP = N(1)-(5-phospho-beta-D-ribosyl)glycinamide + ADP + phosphate + H(+). It participates in purine metabolism; IMP biosynthesis via de novo pathway; N(1)-(5-phospho-D-ribosyl)glycinamide from 5-phospho-alpha-D-ribose 1-diphosphate: step 2/2. This Streptococcus pneumoniae (strain ATCC BAA-255 / R6) protein is Phosphoribosylamine--glycine ligase.